A 540-amino-acid polypeptide reads, in one-letter code: Maintenance of mitochondrial morphology protein 1 (540 aa).

Over 1–25 the chain is Lumenal; that stretch reads MAGPSNQTQPPPPVLTQPSLSFTQG. Residues 26 to 46 form a helical membrane-spanning segment; that stretch reads LLVGQLSVVLLIGAFIKFFIF. The Cytoplasmic portion of the chain corresponds to 47-540; the sequence is GEAPPHPSRN…GSMPDPVVVT (494 aa). Disordered regions lie at residues 52–135, 275–331, 416–471, and 509–540; these read HPSR…SHQP, GPGT…ATAA, GRTG…GGSM, and YGGAQGGGGGGGRGGEEQFAIPGSMPDPVVVT. 3 stretches are compositionally biased toward polar residues: residues 69 to 81, 88 to 105, and 112 to 121; these read YSLNSISADSSPR, STSNILRPVPSSSTNTRS, and YSATPTNPTS. Over residues 122–132 the composition is skewed to basic residues; the sequence is KHSRSRPHHSS. Positions 134-409 constitute an SMP-LTD domain; sequence QPESLDWFNV…EPRVQVVGLP (276 aa). Residues 321–331 are compositionally biased toward low complexity; that stretch reads TNTNTAGATAA. 2 stretches are compositionally biased toward gly residues: residues 442–471 and 511–521; these read TAGGDGVGVRGGGGGGGGGGGVGGSGGGSM and GAQGGGGGGGR.

This sequence belongs to the MMM1 family. Homodimer. Component of the ER-mitochondria encounter structure (ERMES) or MDM complex, composed of MMM1, MDM10, MDM12 and MDM34. An MMM1 homodimer associates with one molecule of MDM12 on each side in a pairwise head-to-tail manner, and the SMP-LTD domains of MMM1 and MDM12 generate a continuous hydrophobic tunnel for phospholipid trafficking.

The protein localises to the endoplasmic reticulum membrane. In terms of biological role, component of the ERMES/MDM complex, which serves as a molecular tether to connect the endoplasmic reticulum (ER) and mitochondria. Components of this complex are involved in the control of mitochondrial shape and protein biogenesis, and function in nonvesicular lipid trafficking between the ER and mitochondria. The MDM12-MMM1 subcomplex functions in the major beta-barrel assembly pathway that is responsible for biogenesis of all outer membrane beta-barrel proteins, and acts in a late step after the SAM complex. The MDM10-MDM12-MMM1 subcomplex further acts in the TOM40-specific pathway after the action of the MDM12-MMM1 complex. Essential for establishing and maintaining the structure of mitochondria and maintenance of mtDNA nucleoids. The sequence is that of Maintenance of mitochondrial morphology protein 1 from Blastomyces gilchristii (strain SLH14081) (Blastomyces dermatitidis).